A 267-amino-acid chain; its full sequence is MAIPAFGLGTFRLKDDVVISSVKTALELGYRAIDTAQIYDNEAAVGLAIAESGVPRHELYITTKIWIENLSKDKLIPSLKESLQKLRTDYVDLTLIHWPSPNDEVSVEEFMQALLEAKKEGLTREIGISNFTIPLMEKAIAAVGAENIATNQIELSPYLQNRKVVAWAKQHGIHITSYMTLAYGKALKDEVIARIAAKHNATPAQVILAWAMGEGYSVIPSSTKRENLESNLKAQNLQLDAEDKKAIAALDCNDRLVSPEGLAPEWD.

Tyrosine 39 serves as the catalytic Proton donor. Substrate is bound at residue histidine 97. 179–231 contacts NADP(+); that stretch reads MTLAYGKALKDEVIARIAAKHNATPAQVILAWAMGEGYSVIPSSTKRENLESN.

It belongs to the aldo/keto reductase family. As to quaternary structure, monomer.

The protein resides in the cytoplasm. It carries out the reaction hydroxyacetone + NADP(+) = methylglyoxal + NADPH + H(+). Its function is as follows. Aldo-keto reductase that significantly contributes to cellular methylglyoxal detoxification by catalyzing the NADPH-dependent conversion of methylglyoxal to acetol. This chain is Methylglyoxal reductase DkgB, found in Escherichia coli O157:H7.